The sequence spans 819 residues: Probable beta-glucosidase G (819 aa).

The first 20 residues, 1-20, serve as a signal peptide directing secretion; it reads MTSASQILVWGLLAASGAQA. Asn41, Asn59, Asn107, Asn228, and Asn277 each carry an N-linked (GlcNAc...) asparagine glycan. Residue Asp305 is part of the active site. Residues Asn337, Asn344, Asn351, Asn403, Asn500, Asn509, Asn554, Asn567, Asn588, Asn627, Asn683, and Asn719 are each glycosylated (N-linked (GlcNAc...) asparagine).

This sequence belongs to the glycosyl hydrolase 3 family.

Its subcellular location is the secreted. The catalysed reaction is Hydrolysis of terminal, non-reducing beta-D-glucosyl residues with release of beta-D-glucose.. It participates in glycan metabolism; cellulose degradation. Functionally, beta-glucosidases are one of a number of cellulolytic enzymes involved in the degradation of cellulosic biomass. Catalyzes the last step releasing glucose from the inhibitory cellobiose. The protein is Probable beta-glucosidase G (bglG) of Emericella nidulans (strain FGSC A4 / ATCC 38163 / CBS 112.46 / NRRL 194 / M139) (Aspergillus nidulans).